Reading from the N-terminus, the 675-residue chain is DNA gyrase subunit B (675 aa).

Residues 453–567 (SELYVVEGDS…NGHIFLAQPP (115 aa)) form the Toprim domain. Residues Glu-459, Asp-532, and Asp-534 each coordinate Mg(2+).

This sequence belongs to the type II topoisomerase GyrB family. Heterotetramer, composed of two GyrA and two GyrB chains. In the heterotetramer, GyrA contains the active site tyrosine that forms a transient covalent intermediate with DNA, while GyrB binds cofactors and catalyzes ATP hydrolysis. Mg(2+) serves as cofactor. The cofactor is Mn(2+). It depends on Ca(2+) as a cofactor.

It is found in the cytoplasm. It carries out the reaction ATP-dependent breakage, passage and rejoining of double-stranded DNA.. With respect to regulation, inhibited by 4-quinoline drugs (nalidixic acid, ciprofloxacin, ofloxacin), although it is much less sensitive than the corresponding enzyme from E.coli. GyrB intrinsic ATPase activity inhibited by aminopyrazinamide and pyrrolamide derivatives. Its function is as follows. A type II topoisomerase that negatively supercoils closed circular double-stranded (ds) DNA in an ATP-dependent manner to modulate DNA topology and maintain chromosomes in an underwound state. Negative supercoiling favors strand separation, and DNA replication, transcription, recombination and repair, all of which involve strand separation. Also able to catalyze the interconversion of other topological isomers of dsDNA rings, including catenanes and knotted rings. Type II topoisomerases break and join 2 DNA strands simultaneously in an ATP-dependent manner. The polypeptide is DNA gyrase subunit B (Mycolicibacterium smegmatis (strain ATCC 700084 / mc(2)155) (Mycobacterium smegmatis)).